Here is a 107-residue protein sequence, read N- to C-terminus: uncharacterized protein (107 aa).

The helical transmembrane segment at 52–72 (LIIHDLFIYIFILNFFFFPFC) threads the bilayer.

The protein localises to the membrane. This is an uncharacterized protein from Saccharomyces cerevisiae (strain ATCC 204508 / S288c) (Baker's yeast).